A 510-amino-acid polypeptide reads, in one-letter code: DNA-directed RNA polymerase I subunit RPA34 (510 aa).

N-acetylmethionine is present on Met1. Positions 1–31 (MEEPQAGDAARFSCPPNFTAKPPASESPRFS) are disordered. At Ser27 the chain carries Phosphoserine. Tyr80 carries the phosphotyrosine modification. Residues 120–143 (GPQQSLSGSPLQPIPASPPPQIPP) are disordered. 4 positions are modified to phosphoserine: Ser128, Ser136, Ser172, and Ser205. Residues 131–143 (QPIPASPPPQIPP) show a composition bias toward pro residues. Residues 203-510 (LGSPEMDVRK…KRKQQQQQPV (308 aa)) are disordered. Over residues 258-270 (GKETFEPEDKTVK) the composition is skewed to basic and acidic residues. Lys270 is covalently cross-linked (Glycyl lysine isopeptide (Lys-Gly) (interchain with G-Cter in SUMO1); alternate). A Glycyl lysine isopeptide (Lys-Gly) (interchain with G-Cter in SUMO2); alternate cross-link involves residue Lys270. Position 285 is a phosphoserine (Ser285). A Phosphothreonine modification is found at Thr287. The residue at position 309 (Ser309) is a Phosphoserine. Lys314 is covalently cross-linked (Glycyl lysine isopeptide (Lys-Gly) (interchain with G-Cter in SUMO1); alternate). Residue Lys314 forms a Glycyl lysine isopeptide (Lys-Gly) (interchain with G-Cter in SUMO2); alternate linkage. Composition is skewed to low complexity over residues 372-382 (AKPQAQAALAA) and 394-407 (DATVEPETEVVGPE). Residues 421–430 (TKKKKKKKER) are compositionally biased toward basic residues. Residues 436–452 (EPIQPLEPELPGEGQPE) show a composition bias toward low complexity. The residue at position 490 (Ser490) is a Phosphoserine.

Belongs to the eukaryotic RPA34 RNA polymerase subunit family. As to quaternary structure, component of the RNA polymerase I (Pol I) complex consisting of 13 subunits: a ten-subunit catalytic core composed of POLR1A/RPA1, POLR1B/RPA2, POLR1C/RPAC1, POLR1D/RPAC2, POLR1H/RPA12, POLR2E/RPABC1, POLR2F/RPABC2, POLR2H/RPABC3, POLR2K/RPABC4 and POLR2L/RPABC5; a mobile stalk subunit POLR1F/RPA43 protruding from the core and additional subunits homologous to general transcription factors POLR1E/RPA49 and POLR1G/RPA34. Forms a heterodimer with POLR1E/RPA49. Part of Pol I pre-initiation complex (PIC), in which Pol I core assembles with RRN3 and promoter-bound UTBF and SL1/TIF-IB complex. Interacts with TAF1A thereby associates with the SL1/TIF-IB complex. Interacts with UBTF. Interacts with POLR1E/PRAF1 through its N-terminal region. Interacts with CD3E. Post-translationally, undergoes tyrosine phosphorylation upon T-cell receptor (TCR) stimulation. This phosphorylation has not been confirmed by other groups. Phosphorylated on tyrosine residues in initiation-competent Pol I-beta complexes but not in Pol I-alpha complexes.

The protein resides in the nucleus. The protein localises to the nucleolus. It localises to the chromosome. Its function is as follows. Component of RNA polymerase I (Pol I), a DNA-dependent RNA polymerase which synthesizes ribosomal RNA precursors using the four ribonucleoside triphosphates as substrates. Involved in UBTF-activated transcription, presumably at a step following PIC formation. Functionally, has been described as a component of preformed T-cell receptor (TCR) complex. The polypeptide is DNA-directed RNA polymerase I subunit RPA34 (Homo sapiens (Human)).